Consider the following 160-residue polypeptide: Deoxyuridine 5'-triphosphate nucleotidohydrolase (160 aa).

Substrate is bound by residues 79-81, asparagine 92, 96-98, and lysine 106; these read RSG and TVD.

It belongs to the dUTPase family. Mg(2+) is required as a cofactor.

It carries out the reaction dUTP + H2O = dUMP + diphosphate + H(+). Its pathway is pyrimidine metabolism; dUMP biosynthesis; dUMP from dCTP (dUTP route): step 2/2. This enzyme is involved in nucleotide metabolism: it produces dUMP, the immediate precursor of thymidine nucleotides and it decreases the intracellular concentration of dUTP so that uracil cannot be incorporated into DNA. The sequence is that of Deoxyuridine 5'-triphosphate nucleotidohydrolase from Sinorhizobium medicae (strain WSM419) (Ensifer medicae).